Consider the following 205-residue polypeptide: 7-methyl-GTP pyrophosphatase (205 aa).

Residue Asp79 is the Proton acceptor of the active site.

This sequence belongs to the Maf family. YceF subfamily. It depends on a divalent metal cation as a cofactor.

It is found in the cytoplasm. The catalysed reaction is N(7)-methyl-GTP + H2O = N(7)-methyl-GMP + diphosphate + H(+). Its function is as follows. Nucleoside triphosphate pyrophosphatase that hydrolyzes 7-methyl-GTP (m(7)GTP). May have a dual role in cell division arrest and in preventing the incorporation of modified nucleotides into cellular nucleic acids. This chain is 7-methyl-GTP pyrophosphatase, found in Paraburkholderia xenovorans (strain LB400).